The sequence spans 400 residues: U-box domain-containing protein 37 (400 aa).

A coiled-coil region spans residues 229–298 (KEWESAYLEE…RKAKEERDLL (70 aa)). The U-box domain maps to 324–398 (EAPQYFICPI…QEWLHASSSF (75 aa)).

It catalyses the reaction S-ubiquitinyl-[E2 ubiquitin-conjugating enzyme]-L-cysteine + [acceptor protein]-L-lysine = [E2 ubiquitin-conjugating enzyme]-L-cysteine + N(6)-ubiquitinyl-[acceptor protein]-L-lysine.. The protein operates within protein modification; protein ubiquitination. Functions as an E3 ubiquitin ligase. The protein is U-box domain-containing protein 37 (PUB37) of Arabidopsis thaliana (Mouse-ear cress).